Here is a 456-residue protein sequence, read N- to C-terminus: Solute carrier family 38 member 6 (456 aa).

M1 is subject to N-acetylmethionine. Residues S4 and S7 each carry the phosphoserine modification. 5 helical membrane-spanning segments follow: residues 42-62 (SPGVSFGLSVFNLMNAIMGSG), 85-105 (VALLASYSVHLLLSMCIQTAV), 111-131 (LGLFAFGLPGKLVVAGTIIIQ), 170-190 (LLIIICVGIVFPLALLPKIGF), and 191-211 (LGYTSSLSFFFMMFFALVVII). C218 and C238 are oxidised to a cystine. N-linked (GlcNAc...) asparagine glycosylation occurs at N233. The chain crosses the membrane as a helical span at residues 250 to 270 (AYALPTMAFSFLCHTSILPIY). N283 carries N-linked (GlcNAc...) asparagine glycosylation. 5 consecutive transmembrane segments (helical) span residues 288–308 (AIALSFLIYFISALFGYLTFY), 327–347 (VVVMTVKLCILFAVLLTVPLI), 371–391 (FLITLALNIIIVLLAIYVPDI), 394–414 (VFGVVGASTSTCLIFIFPGLF), and 431–451 (AFVLLIFGILVGNFSLALIIF).

The protein belongs to the amino acid/polyamine transporter 2 family.

It localises to the cell membrane. The protein resides in the synapse. The catalysed reaction is L-glutamine(out) = L-glutamine(in). The enzyme catalyses L-glutamate(out) = L-glutamate(in). Functionally, amino acid transporter with an apparent selectivity for L-glutamine and L-glutamate. May facilitate glutamine uptake in excitatory neurons. The transport mechanism remains to be elucidated. This is Solute carrier family 38 member 6 from Homo sapiens (Human).